We begin with the raw amino-acid sequence, 281 residues long: 4-diphosphocytidyl-2-C-methyl-D-erythritol kinase (281 aa).

Lysine 11 is an active-site residue. An ATP-binding site is contributed by 92–102 (LVSAGLAGGSA). The active site involves aspartate 132.

The protein belongs to the GHMP kinase family. IspE subfamily.

The catalysed reaction is 4-CDP-2-C-methyl-D-erythritol + ATP = 4-CDP-2-C-methyl-D-erythritol 2-phosphate + ADP + H(+). It functions in the pathway isoprenoid biosynthesis; isopentenyl diphosphate biosynthesis via DXP pathway; isopentenyl diphosphate from 1-deoxy-D-xylulose 5-phosphate: step 3/6. Catalyzes the phosphorylation of the position 2 hydroxy group of 4-diphosphocytidyl-2C-methyl-D-erythritol. This Ehrlichia ruminantium (strain Gardel) protein is 4-diphosphocytidyl-2-C-methyl-D-erythritol kinase.